The primary structure comprises 530 residues: Cation transporter HKT2;2 (530 aa).

The Cytoplasmic portion of the chain corresponds to 1 to 40 (MTSIYQEFIHTKCQSFRSIGRYVLHSIVLIYRFVSLHVHP). A run of 2 helical transmembrane segments spans residues 41–61 (FWIQLSYFLLISILGSVLLMF) and 102–122 (IVVLTLLMLVGGEVFVSFLGL). Over 123–186 (MLRLKHKHNP…DLKRSKRLRW (64 aa)) the chain is Cytoplasmic. A run of 2 helical transmembrane segments spans residues 187–207 (FLGFVVFSYFVVIHVVGFLLV) and 260–280 (GLLLLFIGQILAGNTLYPLFL). At 281–317 (RILIWFLGKVTKLKDLKLMIKNSDELQYDYLLPKLPT) the chain is on the cytoplasmic side. The next 2 membrane-spanning stretches (helical) occupy residues 318–338 (AFLASTVIGLMASLVTLFGSV) and 372–392 (IDCSLIAPAVLVLFIILMYLP). Topologically, residues 393 to 420 (PSTTFALSNGDEKTANKKAKRKLGLVVR) are cytoplasmic. A run of 2 helical transmembrane segments spans residues 421-441 (NLAFSQLACNAVFVIVALITE) and 494-514 (SLSGWWSDEGKLLLVSVMLYG). At 515–530 (RLKAFTKGTGEYWRLW) the chain is on the cytoplasmic side.

Belongs to the TrkH potassium transport family. HKT (TC 2.A.38.3) subfamily.

It localises to the membrane. Seems to be involved in regulation of potassium-sodium homeostasis. Seems to act as a potassium-sodium cotransporter, which mediates increased potassium uptake under external sodium accumulation and contributes to salt-tolerance in cultivar indica Pokkali. The chain is Cation transporter HKT2;2 from Oryza sativa subsp. indica (Rice).